Here is a 594-residue protein sequence, read N- to C-terminus: Adenine deaminase 1 (594 aa).

It belongs to the metallo-dependent hydrolases superfamily. Adenine deaminase family. Requires Mn(2+) as cofactor.

The enzyme catalyses adenine + H2O + H(+) = hypoxanthine + NH4(+). This is Adenine deaminase 1 from Desulfotalea psychrophila (strain LSv54 / DSM 12343).